The chain runs to 85 residues: Hepcidin (85 aa).

The signal sequence occupies residues 1–24 (MKTFSVAVAVAVVLAFICLQESSA). The propeptide occupies 25-64 (VPVTEVQELEEPMSNEYQEMPVESWKMPYNNRHKRHSSPG). 4 cysteine pairs are disulfide-bonded: C66–C83, C69–C72, C70–C79, and C73–C82.

As to expression, predominantly expressed in liver.

Its subcellular location is the secreted. Its function is as follows. Seems to act as a signaling molecule involved in the maintenance of iron homeostasis. Seems to be required in conjunction with HFE to regulate both intestinal iron absorption and iron storage in macrophages. Antimicrobial activity against Gram-negative bacteria such as E.coli. The chain is Hepcidin (hamp) from Morone chrysops x Morone saxatilis (White bass x Striped bass).